We begin with the raw amino-acid sequence, 548 residues long: Folylpolyglutamate synthase (548 aa).

130-133 is an ATP binding site; that stretch reads GKGS. Mg(2+) contacts are provided by serine 157, glutamate 234, and histidine 262. ATP is bound by residues arginine 382 and aspartate 396.

Belongs to the folylpolyglutamate synthase family. It depends on a monovalent cation as a cofactor.

Its subcellular location is the mitochondrion inner membrane. The protein resides in the mitochondrion matrix. It is found in the cytoplasm. It carries out the reaction (6S)-5,6,7,8-tetrahydrofolyl-(gamma-L-Glu)(n) + L-glutamate + ATP = (6S)-5,6,7,8-tetrahydrofolyl-(gamma-L-Glu)(n+1) + ADP + phosphate + H(+). Its pathway is cofactor biosynthesis; tetrahydrofolylpolyglutamate biosynthesis. Functionally, catalyzes conversion of folates to polyglutamate derivatives allowing concentration of folate compounds in the cell and the intracellular retention of these cofactors, which are important substrates for most of the folate-dependent enzymes that are involved in one-carbon transfer reactions involved in purine, pyrimidine and amino acid synthesis. Required for methionine synthesis and maintenance of intact mitochondrial DNA. Involved in telomere maintenance. In Saccharomyces cerevisiae (strain FostersB) (Baker's yeast), this protein is Folylpolyglutamate synthase.